The chain runs to 378 residues: Stimulator of interferon genes protein (378 aa).

The Cytoplasmic segment spans residues 1 to 17 (MPHSSLHPSIPQPRGLR). The interval 1-190 (MPHSSLHPSI…IYNQFHNNTL (190 aa)) is mediates interaction with ZDHHC1 and ZDHHC11. A helical transmembrane segment spans residues 18–34 (AQKAALVLLSACLVALW). Topologically, residues 35-44 (GLGEPPDYTL) are lumenal. The helical transmembrane segment at 45-69 (KWLVLHLASQQMGLLIKGICSLAEE) threads the bilayer. Residues 70–91 (LCHVHSRYHGSYWRAVRACLCS) are Cytoplasmic-facing. A lipid anchor (S-palmitoyl cysteine) is attached at Cys88. The chain crosses the membrane as a helical span at residues 92 to 106 (SMRCGALLLLSCYFY). Topologically, residues 107-116 (CSLPNMADLP) are lumenal. The chain crosses the membrane as a helical span at residues 117 to 134 (FTWMLALLGLSQALNILL). Residues 135–378 (GLQGLAPAEV…KPLPLRSDVF (244 aa)) are Cytoplasmic-facing. Lys150 is covalently cross-linked (Glycyl lysine isopeptide (Lys-Gly) (interchain with G-Cter in ubiquitin)). Residues 153–339 (FNVAHGLAWS…LQHLRQEERE (187 aa)) form a cyclic dinucleotide-binding domain (CBD) region. Ser162 and Tyr167 together coordinate 2',3'-cGAMP. Positions 162 and 167 each coordinate 3',3'-c-di-GMP. Tyr167 provides a ligand contact to 2',3'-cUAMP. A Glycyl lysine isopeptide (Lys-Gly) (interchain with G-Cter in ubiquitin) cross-link involves residue Lys236. 2',3'-cGAMP-binding residues include Arg238 and Thr263. 2',3'-cUAMP is bound by residues Arg238 and Thr263. 3',3'-c-di-GMP is bound by residues 238-241 (RVYT) and Thr263. Residues 339 to 378 (EVTMGSTETSVMPGSSVLSQEPELLISGLEKPLPLRSDVF) form a C-terminal tail (CTT) region. Ser354 carries the post-translational modification Phosphoserine. Ser357 and Ser365 each carry phosphoserine; by TBK1. A pLxIS motif motif is present at residues 362–365 (LLIS).

The protein belongs to the STING family. Homodimer; forms a homodimer in absence of cyclic nucleotide (c-di-GMP or cGAMP); 'Lys-63'-linked ubiquitination at Lys-150 is required for homodimerization. Homotetramer; in presence of cyclic nucleotide (c-di-GMP or cGAMP), forms tetramers and higher-order oligomers through side-by-side packing. Interacts (when phosphorylated) with IRF3; following activation and phosphorylation on the pLxIS motif by TBK1, recruits IRF3. Interacts with RIGI, MAVS and SSR2. Interacts with RNF5 and TRIM56. Interacts with TBK1; when homodimer, leading to subsequent production of IFN-beta. Interacts with IFIT1 and IFIT2. Interacts with TRIM29; this interaction induces STING1 ubiquitination and subsequent degradation. Associates with the MHC-II complex. Interacts with STEEP1; interaction takes place upon cGAMP-activation and STING1 phosphorylation by MAP3K7/TAK1 and promotes STING1 translocation to COPII vesicles. Interacts with SEC24A, SEC24B and SEC24C; promoting translocation to COPII vesicles. Interacts (when ubiquitinated) with SQSTM1; leading to relocalization to autophagosomes. Interacts with SURF4. Interacts with HNRNPA2B1. Interacts with ZDHHC1; ZDHHC1 constitutively interacts with STING1 and in presence of DNA viruses activates it by promoting its cGAMP-induced oligomerization and the recruitment of downstream signaling components. Interacts with ZDHHC11; in presence of DNA viruses promotes the recruitment of IRF3 to STING1. Interacts with TOMM70. Interacts with TAB1; promoting recruitment of TAB1 to the endoplasmic reticulum membrane and subsequent activation of MAP3K7/TAK1. Interacts (via transmembrane domain) with TMEM203. Interacts with DDX41. In terms of processing, phosphorylation by TBK1 leads to activation and production of IFN-beta. Following cyclic nucleotide (c-di-GMP or cGAMP)-binding, activation and translocation from the endoplasmic reticulum, STING1 is phosphorylated by TBK1 at Ser-365 in the pLxIS motif. The phosphorylated pLxIS motif constitutes an IRF3-binding motif, leading to recruitment of the transcription factor IRF3 to induce type-I interferons and other cytokines. Phosphorylated on tyrosine residues upon MHC-II aggregation. Dephosphorylation by PPP6C leads to inactivation and decreased production of IFN-beta. Phosphorylation at Ser-357 is also required to activate IRF3. Phosphorylation at Ser-354 by MAP3K7/TAK1 facilitates its interaction with STEEP1, promoting STING1 translocation to COPII vesicles. Ubiquitinated. Ubiquitinated via 'Lys-63'-linked ubiquitin chains in response to double-stranded DNA treatment, leading to relocalization to autophagosomes and subsequent degradation; this process is dependent on SQSTM1. 'Lys-63'-linked ubiquitination mediated by TRIM56 at Lys-150 promotes homodimerization and recruitment of the antiviral kinase TBK1 and subsequent production of IFN-beta. 'Lys-48'-linked polyubiquitination at Lys-150 occurring after viral infection is mediated by RNF5 and leads to proteasomal degradation. 'Lys-11'-linked polyubiquitination at Lys-150 by RNF26 leads to stabilize STING1: it protects STING1 from RNF5-mediated 'Lys-48'-linked polyubiquitination. 'Lys-33'-linked and 'Lys-48'-linked deubiquitinated by USP20; leading to its stabilization and promotion of innate antiviral response. 'Lys-48'-linked deubiquitinated by USP44; leading to its stabilization and promotion of innate antiviral response. 'Lys-63'-linked deubiquitinated by USP49; leading to inhibition of the subsequent recruitment of TBK1 to the signaling complex. 'Lys-63'-linked ubiquitination mediated by RNF39 promotes the activation of the cGAS-STING pathway. Post-translationally, palmitoylation takes place in the Golgi apparatus and creates a platform for the recruitment of TBK1.

The protein resides in the endoplasmic reticulum membrane. Its subcellular location is the cytoplasm. It is found in the perinuclear region. The protein localises to the endoplasmic reticulum-Golgi intermediate compartment membrane. It localises to the golgi apparatus membrane. The protein resides in the cytoplasmic vesicle. Its subcellular location is the autophagosome membrane. It is found in the mitochondrion outer membrane. The protein localises to the cell membrane. The catalysed reaction is H(+)(in) = H(+)(out). Facilitator of innate immune signaling that acts as a sensor of cytosolic DNA from bacteria and viruses and promotes the production of type I interferon (IFN-alpha and IFN-beta). Innate immune response is triggered in response to non-CpG double-stranded DNA from viruses and bacteria delivered to the cytoplasm. Acts by binding cyclic dinucleotides: recognizes and binds cyclic di-GMP (c-di-GMP), a second messenger produced by bacteria, cyclic UMP-AMP (2',3'-cUAMP), and cyclic GMP-AMP (cGAMP), a messenger produced by CGAS in response to DNA virus in the cytosol. Upon binding to c-di-GMP or cGAMP, STING oligomerizes, translocates from the endoplasmic reticulum and is phosphorylated by TBK1 on the pLxIS motif, leading to recruitment and subsequent activation of the transcription factor IRF3 to induce expression of type I interferon and exert a potent anti-viral state. Exhibits 2',3' phosphodiester linkage-specific ligand recognition: can bind both 2'-3' linked cGAMP (2'-3'-cGAMP) and 3'-3' linked cGAMP but is preferentially activated by 2'-3' linked cGAMP. The preference for 2'-3'-cGAMP, compared to other linkage isomers is probably due to the ligand itself, whichs adopts an organized free-ligand conformation that resembles the STING1-bound conformation and pays low energy costs in changing into the active conformation. In addition to promote the production of type I interferons, plays a direct role in autophagy. Following cGAMP-binding, STING1 buds from the endoplasmic reticulum into COPII vesicles, which then form the endoplasmic reticulum-Golgi intermediate compartment (ERGIC). The ERGIC serves as the membrane source for WIPI2 recruitment and LC3 lipidation, leading to formation of autophagosomes that target cytosolic DNA or DNA viruses for degradation by the lysosome. Promotes autophagy by acting as a proton channel that directs proton efflux from the Golgi to facilitate MAP1LC3B/LC3B lipidation. The autophagy- and interferon-inducing activities can be uncoupled and autophagy induction is independent of TBK1 phosphorylation. Autophagy is also triggered upon infection by bacteria: following c-di-GMP-binding, which is produced by live Gram-positive bacteria, promotes reticulophagy. May be involved in translocon function, the translocon possibly being able to influence the induction of type I interferons. May be involved in transduction of apoptotic signals via its association with the major histocompatibility complex class II (MHC-II). The sequence is that of Stimulator of interferon genes protein from Bos taurus (Bovine).